Consider the following 363-residue polypeptide: Fructose-bisphosphate aldolase A (363 aa).

Residue Arg43 coordinates beta-D-fructose 1,6-bisphosphate. The Proton acceptor role is filled by Glu188. Lys230 serves as the catalytic Schiff-base intermediate with dihydroxyacetone-P. Residues 272 to 274 (SGG), Ser301, and Arg304 contribute to the beta-D-fructose 1,6-bisphosphate site.

This sequence belongs to the class I fructose-bisphosphate aldolase family. In terms of assembly, tetramer.

The enzyme catalyses beta-D-fructose 1,6-bisphosphate = D-glyceraldehyde 3-phosphate + dihydroxyacetone phosphate. The protein operates within carbohydrate degradation; glycolysis; D-glyceraldehyde 3-phosphate and glycerone phosphate from D-glucose: step 4/4. Plays a key role in glycolysis and gluconeogenesis. This chain is Fructose-bisphosphate aldolase A, found in Salmo salar (Atlantic salmon).